Consider the following 311-residue polypeptide: NEDD4 family-interacting protein 2 (311 aa).

Residues 1 to 133 are disordered; it reads RRSASDAELS…PPYSSITVEA (133 aa). Topologically, residues 1–206 are cytoplasmic; that stretch reads RRSASDAELS…VEQLRVGNDG (206 aa). The segment covering 7-22 has biased composition (low complexity); it reads AELSAGAEGATGSEAA. Gly residues predominate over residues 26–37; that stretch reads DLGGRTRGGGRG. A compositionally biased stretch (low complexity) spans 38-47; that stretch reads SAAAAATTST. Basic and acidic residues predominate over residues 48–75; sequence REAEGAERRGDTPARKPDPEAGRMDHHQ. The span at 92–101 shows a compositional bias: polar residues; the sequence is ESSAVEQPST. Low complexity predominate over residues 102–120; the sequence is SSLAAPTVEAAASAPALDP. Residues 123–126 form an interaction with NEDD4 region; it reads PPPY. The short motif at 123–126 is the PPxY motif 1 element; it reads PPPY. 4 positions are modified to phosphotyrosine; by SRC: tyrosine 126, tyrosine 142, tyrosine 146, and tyrosine 152. Short sequence motifs (PPxY motif) lie at residues 149 to 152 and 159 to 161; these read PPPY and PTY. Residues 207 to 227 traverse the membrane as a helical segment; sequence IFMLAFFMAFIFNWLGFCLSF. Residues 228-232 are Extracellular-facing; that stretch reads CITNT. A helical membrane pass occupies residues 233–253; it reads IAGRYGAICGFGLSLIKWILI. The Cytoplasmic segment spans residues 254–262; sequence VRFSDYFTG. Residues 263–283 traverse the membrane as a helical segment; the sequence is YFNGQYWLWWIFLVLGLLLFF. The Extracellular portion of the chain corresponds to 284-311; that stretch reads RGFVNYLKVRNMSESMAAAHRTRYFFLL.

In terms of assembly, forms heterodimers with NDFIP1. Interacts with HECT domain-containing E3 ubiquitin-protein ligases, including NEDD4. Interacts with NEDD4L. When phosphorylated at Tyr-142, interacts with SRC and LYN SH2 domain. May thus act as a scaffold that recruits SRC to NDFIP1, enhancing NDFIP1 phosphorylation. Interacts with SLC11A2/DMT1. May interact with phosphorylated EGFR. Interacts with KCNH2. Post-translationally, ubiquitinated by NEDD4 and NEDD4L; which does not affect turnover. Also ubiquitinated by ITCH. Undergoes transient tyrosine-phosphorylation following EGF stimulation, most probably catalyzed by SRC. Phosphorylation on Tyr-126, Tyr-146 and Tyr-152 are dependent on the phosphorylation on Tyr-142. Also phosphorylated by LYN and FYN. Ubiquitously expressed, with highest levels in brain, liver, kidney and testis.

It is found in the endosome membrane. It localises to the golgi apparatus membrane. The protein resides in the endosome. The protein localises to the multivesicular body membrane. Its function is as follows. Activates HECT domain-containing E3 ubiquitin-protein ligases, including ITCH, NEDD4, NEDD4L, SMURF2, WWP1 and WWP2, and consequently modulates the stability of their targets. As a result, may control many cellular processes. Recruits ITCH, NEDD4 and SMURF2 to endosomal membranes. Negatively regulates KCNH2 potassium channel activity by decreasing its cell-surface expression and interfering with channel maturation through recruitment of NEDD4L to the Golgi apparatus and multivesicular body where it mediates KCNH2 degradation. May modulate EGFR signaling. Together with NDFIP1, limits the cytokine signaling and expansion of effector Th2 T-cells by promoting degradation of JAK1, probably by ITCH- and NEDD4L-mediated ubiquitination. This Mus musculus (Mouse) protein is NEDD4 family-interacting protein 2 (Ndfip2).